The sequence spans 382 residues: Nitric oxide reductase FlRd-NAD(+) reductase (382 aa).

This sequence belongs to the FAD-dependent oxidoreductase family. FAD serves as cofactor.

It is found in the cytoplasm. The catalysed reaction is 2 reduced [nitric oxide reductase rubredoxin domain] + NAD(+) + H(+) = 2 oxidized [nitric oxide reductase rubredoxin domain] + NADH. Its pathway is nitrogen metabolism; nitric oxide reduction. Functionally, one of at least two accessory proteins for anaerobic nitric oxide (NO) reductase. Reduces the rubredoxin moiety of NO reductase. This is Nitric oxide reductase FlRd-NAD(+) reductase from Vibrio vulnificus (strain CMCP6).